The sequence spans 312 residues: MRVILAPMEGVLDSLVRELLSEVNDYDLCITEFLRVVDQLLPAKSFYRLCPELHNQSRTQSGTLVRIQLLGQYPEWLAENAARAVALGSYGVDLNCGCPSKLVNGSGGGATLLKDPELIYQGAKAMRAAVPAHLPVTVKIRLGWDSGDRQFEIADAVQQAGATELAVHGRTKEDGYQAERINWQAIGEIRQRLTIPVIANGEIWDYQSAQECMKVTGCDAVMLGRGALNVPNLSRVVKYNEPRMPWLEVVKLLQKYVQLEKQGDTGLYHVARIKQWLGYLRKEYTEATDLFGEIRALKNSKDIALAIQRINR.

Residues 7–9 (PME) and Gln68 contribute to the FMN site. The active-site Proton donor is Cys98. FMN contacts are provided by residues Lys139, 200–202 (NGE), and 224–225 (GR).

Belongs to the Dus family. DusC subfamily. FMN is required as a cofactor.

It catalyses the reaction 5,6-dihydrouridine(16) in tRNA + NADP(+) = uridine(16) in tRNA + NADPH + H(+). It carries out the reaction 5,6-dihydrouridine(16) in tRNA + NAD(+) = uridine(16) in tRNA + NADH + H(+). Functionally, catalyzes the synthesis of 5,6-dihydrouridine (D), a modified base found in the D-loop of most tRNAs, via the reduction of the C5-C6 double bond in target uridines. Specifically modifies U16 in tRNAs. In Yersinia pestis, this protein is tRNA-dihydrouridine(16) synthase.